The primary structure comprises 382 residues: 3-phytase (382 aa).

The first 26 residues, 1–26 (MKVPKTMLLSTAAGLLLSLTATSVSA), serve as a signal peptide directing secretion. In terms of domain architecture, BPP spans 27–361 (HYVNEEHHFK…VSWEQIAQHL (335 aa)).

Its subcellular location is the secreted. It carries out the reaction 1D-myo-inositol hexakisphosphate + H2O = 1D-myo-inositol 1,2,4,5,6-pentakisphosphate + phosphate. The protein is 3-phytase (phy) of Bacillus subtilis (strain 168).